Consider the following 158-residue polypeptide: Sec-independent protein translocase protein TatB (158 aa).

Residues 1–21 (MFGISFSELLLVGLVALLVLG) traverse the membrane as a helical segment. The segment at 73 to 158 (DEARKMFAPN…HDSSLPPRAP (86 aa)) is disordered. A compositionally biased stretch (low complexity) spans 80-90 (APNQPSENSPE).

It belongs to the TatB family. In terms of assembly, the Tat system comprises two distinct complexes: a TatABC complex, containing multiple copies of TatA, TatB and TatC subunits, and a separate TatA complex, containing only TatA subunits. Substrates initially bind to the TatABC complex, which probably triggers association of the separate TatA complex to form the active translocon.

The protein resides in the cell inner membrane. Its function is as follows. Part of the twin-arginine translocation (Tat) system that transports large folded proteins containing a characteristic twin-arginine motif in their signal peptide across membranes. Together with TatC, TatB is part of a receptor directly interacting with Tat signal peptides. TatB may form an oligomeric binding site that transiently accommodates folded Tat precursor proteins before their translocation. In Pseudomonas syringae pv. syringae (strain B728a), this protein is Sec-independent protein translocase protein TatB.